The sequence spans 164 residues: MTDTFWAFVGLVLFLALLAYFKVPEMIVHRLDARAKRIKDELDEALRLREEAQEVLAEYQRKHAEAEKDAQEIIAAAKREVEAVVSEARTKAEEYVKNRNKLAEQKIAQAEADAIRVVSSSAVDLAVSAARVLIEQELDSNKANELIKESLFEESLTKMKAYLN.

Residues 4–24 form a helical membrane-spanning segment; that stretch reads TFWAFVGLVLFLALLAYFKVP.

The protein belongs to the ATPase B chain family. F-type ATPases have 2 components, F(1) - the catalytic core - and F(0) - the membrane proton channel. F(1) has five subunits: alpha(3), beta(3), gamma(1), delta(1), epsilon(1). F(0) has three main subunits: a(1), b(2) and c(10-14). The alpha and beta chains form an alternating ring which encloses part of the gamma chain. F(1) is attached to F(0) by a central stalk formed by the gamma and epsilon chains, while a peripheral stalk is formed by the delta and b chains.

Its subcellular location is the cell inner membrane. Its function is as follows. F(1)F(0) ATP synthase produces ATP from ADP in the presence of a proton or sodium gradient. F-type ATPases consist of two structural domains, F(1) containing the extramembraneous catalytic core and F(0) containing the membrane proton channel, linked together by a central stalk and a peripheral stalk. During catalysis, ATP synthesis in the catalytic domain of F(1) is coupled via a rotary mechanism of the central stalk subunits to proton translocation. In terms of biological role, component of the F(0) channel, it forms part of the peripheral stalk, linking F(1) to F(0). This is ATP synthase subunit b 2 from Bartonella quintana (strain Toulouse) (Rochalimaea quintana).